The sequence spans 636 residues: Methionine--tRNA ligase (636 aa).

Residues 12-22 carry the 'HIGH' region motif; the sequence is YYVNGDPHVGS. Positions 127, 130, 145, and 148 each coordinate Zn(2+). The short motif at 298 to 302 is the 'KMSKS' region element; sequence KMSKS. K301 serves as a coordination point for ATP. The 102-residue stretch at 535–636 folds into the tRNA-binding domain; that stretch reads EFNKIEIKVV…KTVEAGAIVS (102 aa).

Belongs to the class-I aminoacyl-tRNA synthetase family. MetG type 2A subfamily. In terms of assembly, homodimer. The cofactor is Zn(2+).

The protein localises to the cytoplasm. The enzyme catalyses tRNA(Met) + L-methionine + ATP = L-methionyl-tRNA(Met) + AMP + diphosphate. Is required not only for elongation of protein synthesis but also for the initiation of all mRNA translation through initiator tRNA(fMet) aminoacylation. The sequence is that of Methionine--tRNA ligase (metG) from Fusobacterium nucleatum subsp. nucleatum (strain ATCC 25586 / DSM 15643 / BCRC 10681 / CIP 101130 / JCM 8532 / KCTC 2640 / LMG 13131 / VPI 4355).